A 340-amino-acid chain; its full sequence is Phospho-N-acetylmuramoyl-pentapeptide-transferase (340 aa).

9 helical membrane-spanning segments follow: residues 22–42 (VVVP…LLIP), 69–89 (TMGG…WSGW), 95–115 (AVAL…WLVI), 129–149 (LLLQ…QGIP), 156–176 (GIGT…VLVG), 186–206 (GMDG…GLLH), 209–229 (PELS…LVHN), 235–257 (LFMG…LLGD), and 316–336 (VVGS…AWWH).

The protein belongs to the glycosyltransferase 4 family. MraY subfamily. The cofactor is Mg(2+).

The protein localises to the cell inner membrane. The enzyme catalyses UDP-N-acetyl-alpha-D-muramoyl-L-alanyl-gamma-D-glutamyl-meso-2,6-diaminopimeloyl-D-alanyl-D-alanine + di-trans,octa-cis-undecaprenyl phosphate = di-trans,octa-cis-undecaprenyl diphospho-N-acetyl-alpha-D-muramoyl-L-alanyl-D-glutamyl-meso-2,6-diaminopimeloyl-D-alanyl-D-alanine + UMP. It participates in cell wall biogenesis; peptidoglycan biosynthesis. Its function is as follows. Catalyzes the initial step of the lipid cycle reactions in the biosynthesis of the cell wall peptidoglycan: transfers peptidoglycan precursor phospho-MurNAc-pentapeptide from UDP-MurNAc-pentapeptide onto the lipid carrier undecaprenyl phosphate, yielding undecaprenyl-pyrophosphoryl-MurNAc-pentapeptide, known as lipid I. The sequence is that of Phospho-N-acetylmuramoyl-pentapeptide-transferase from Synechococcus sp. (strain JA-2-3B'a(2-13)) (Cyanobacteria bacterium Yellowstone B-Prime).